The primary structure comprises 617 residues: Translation initiation factor IF-2 (617 aa).

A compositionally biased stretch (basic residues) spans 1–11; it reads MSKHKPRHFQK. Residues 1 to 25 form a disordered region; sequence MSKHKPRHFQKNKFDNRAKTSAKQQ. The tr-type G domain occupies 119–288; it reads PRPPIVTIMG…ILLVAEVEDY (170 aa). Positions 128–135 are G1; the sequence is GHVDHGKT. 128–135 lines the GTP pocket; sequence GHVDHGKT. The interval 153–157 is G2; the sequence is GITQK. The tract at residues 175 to 178 is G3; the sequence is DTPG. GTP contacts are provided by residues 175 to 179 and 229 to 232; these read DTPGH and NKMD. The interval 229–232 is G4; the sequence is NKMD. Positions 265 to 267 are G5; it reads SAL.

It belongs to the TRAFAC class translation factor GTPase superfamily. Classic translation factor GTPase family. IF-2 subfamily.

It localises to the cytoplasm. Functionally, one of the essential components for the initiation of protein synthesis. Protects formylmethionyl-tRNA from spontaneous hydrolysis and promotes its binding to the 30S ribosomal subunits. Also involved in the hydrolysis of GTP during the formation of the 70S ribosomal complex. This chain is Translation initiation factor IF-2 (infB), found in Mycoplasma pneumoniae (strain ATCC 29342 / M129 / Subtype 1) (Mycoplasmoides pneumoniae).